A 351-amino-acid polypeptide reads, in one-letter code: Protein RecA (351 aa).

68–75 (GPESSGKT) is a binding site for ATP.

This sequence belongs to the RecA family.

The protein resides in the cytoplasm. Its function is as follows. Can catalyze the hydrolysis of ATP in the presence of single-stranded DNA, the ATP-dependent uptake of single-stranded DNA by duplex DNA, and the ATP-dependent hybridization of homologous single-stranded DNAs. It interacts with LexA causing its activation and leading to its autocatalytic cleavage. This chain is Protein RecA, found in Chloroflexus aggregans (strain MD-66 / DSM 9485).